Here is a 447-residue protein sequence, read N- to C-terminus: Phosphoglucosamine mutase (447 aa).

The active-site Phosphoserine intermediate is the S106. Residues S106, D245, D247, and D249 each coordinate Mg(2+). Position 106 is a phosphoserine (S106).

This sequence belongs to the phosphohexose mutase family. Requires Mg(2+) as cofactor. Post-translationally, activated by phosphorylation.

It carries out the reaction alpha-D-glucosamine 1-phosphate = D-glucosamine 6-phosphate. Catalyzes the conversion of glucosamine-6-phosphate to glucosamine-1-phosphate. This Cupriavidus metallidurans (strain ATCC 43123 / DSM 2839 / NBRC 102507 / CH34) (Ralstonia metallidurans) protein is Phosphoglucosamine mutase.